The chain runs to 624 residues: MAENGESSGPPRPSRGPAAAQGSAAAPAEPKIIKVTVKTPKEKEEFAVPENSSVQQFKEAISKRFKSQTDQLVLIFAGKILKDQDTLIQHGIHDGLTVHLVIKSQNRPQGQSTQPSNAAGTNTTSASTPRSNSTPISTNSNPFGLGSLGGLAGLSSLGLSSTNFSELQSQMQQQLMASPEMMIQIMENPFVQSMLSNPDLMRQLIMANPQMQQLIQRNPEISHLLNNPDIMRQTLEIARNPAMMQEMMRNQDLALSNLESIPGGYNALRRMYTDIQEPMLNAAQEQFGGNPFASVGSSSSSGEGTQPSRTENRDPLPNPWAPPPATQSSATTSTTTSTGSGSGNSSSNATGNTVAAANYVASIFSTPGMQSLLQQITENPQLIQNMLSAPYMRSMMQSLSQNPDLAAQMMLNSPLFTANPQLQEQMRPQLPAFLQQMQNPDTLSAMSNPRAMQALMQIQQGLQTLATEAPGLIPSFTPGVGVGVLGTAIGPVGPVTPIGPIGPIVPFTPIGPIGPIGPTGPAAPPGSTGSGGPTGPTVSSAAPSETTSPTSESGPNQQFIQQMVQALAGANAPQLPNPEVRFQQQLEQLNAMGFLNREANLQALIATGGDINAAIERLLGSQPS.

Disordered stretches follow at residues 1–32 (MAEN…EPKI) and 106–141 (NRPQ…TNSN). N-acetylalanine is present on Ala-2. Residues 15–32 (RGPAAAQGSAAAPAEPKI) show a composition bias toward low complexity. Residues 33 to 107 (IKVTVKTPKE…VHLVIKSQNR (75 aa)) enclose the Ubiquitin-like domain. Over residues 106-115 (NRPQGQSTQP) the composition is skewed to polar residues. Low complexity predominate over residues 116 to 141 (SNAAGTNTTSASTPRSNSTPISTNSN). 2 consecutive STI1 domains span residues 178 to 206 (SPEM…QLIM) and 208 to 247 (NPQM…MQEM). A disordered region spans residues 287–349 (FGGNPFASVG…SGSGNSSSNA (63 aa)). The span at 294 to 304 (SVGSSSSSGEG) shows a compositional bias: low complexity. A compositionally biased stretch (pro residues) spans 316-325 (LPNPWAPPPA). Low complexity predominate over residues 326–349 (TQSSATTSTTTSTGSGSGNSSSNA). STI1 domains follow at residues 379 to 426 (NPQL…QEQM) and 430 to 462 (LPAF…QQGL). Tandem repeats lie at residues 491–493 (PVG), 494–496 (PVT), 497–499 (PIG), 500–502 (PIG), 503–505 (PIV), 506–508 (PFT), 509–511 (PIG), 512–514 (PIG), 515–517 (PIG), 518–520 (PTG), 521–523 (PAA), and 524–526 (PPG). Positions 491–526 (PVGPVTPIGPIGPIVPFTPIGPIGPIGPTGPAAPPG) are 12 X 3 AA tandem repeats of P-X-X. Residues 512 to 556 (PIGPIGPTGPAAPPGSTGSGGPTGPTVSSAAPSETTSPTSESGPN) form a disordered region. Residues 535 to 553 (GPTVSSAAPSETTSPTSES) show a composition bias toward low complexity. A UBA domain is found at 581–621 (RFQQQLEQLNAMGFLNREANLQALIATGGDINAAIERLLGS).

Homodimer. Forms heterodimer with UBQLN1. Binds UBE3A and BTRC. Interacts with the 19S proteasome subunit. Interacts with C9orf72. Interacts with HNRNPA1 and HNRNPU. Found in a complex with UBQLN1 and MAP1LC3A/B/C. Interacts with EPS15, EPN1 and EPN2. Interacts with HERPUD1. Interacts with RAD23A. Interacts with TARDBP. Interacts (via C-terminus) with FAF2 (via N-terminus). Interacts with UBQLN4. Binds CD47. Post-translationally, degraded during macroautophagy.

It is found in the cytoplasm. It localises to the nucleus. The protein localises to the membrane. The protein resides in the cytoplasmic vesicle. Its subcellular location is the autophagosome. Plays an important role in the regulation of different protein degradation mechanisms and pathways including ubiquitin-proteasome system (UPS), autophagy and the endoplasmic reticulum-associated protein degradation (ERAD) pathway. Mediates the proteasomal targeting of misfolded or accumulated proteins for degradation by binding (via UBA domain) to their polyubiquitin chains and by interacting (via ubiquitin-like domain) with the subunits of the proteasome. Plays a role in the ERAD pathway via its interaction with ER-localized proteins FAF2/UBXD8 and HERPUD1 and may form a link between the polyubiquitinated ERAD substrates and the proteasome. Involved in the regulation of macroautophagy and autophagosome formation; required for maturation of autophagy-related protein LC3 from the cytosolic form LC3-I to the membrane-bound form LC3-II and may assist in the maturation of autophagosomes to autolysosomes by mediating autophagosome-lysosome fusion. Negatively regulates the endocytosis of GPCR receptors: AVPR2 and ADRB2, by specifically reducing the rate at which receptor-arrestin complexes concentrate in clathrin-coated pits (CCPs). This chain is Ubiquilin-2 (UBQLN2), found in Homo sapiens (Human).